Consider the following 711-residue polypeptide: Choline transporter-like protein 2 (711 aa).

Residues 1–33 (MGDERPHYYGKHGTPQKYDPTFKGPIYNRGCTD) lie on the Cytoplasmic side of the membrane. Phosphothreonine is present on Thr14. A helical transmembrane segment spans residues 34–54 (VICCVFLLVAIVGYVAVGIIA). The Extracellular portion of the chain corresponds to 55–232 (WTHGDPRKVI…RIFEDYTVSW (178 aa)). Residues Asn187 and Asn200 are each glycosylated (N-linked (GlcNAc...) asparagine). The chain crosses the membrane as a helical span at residues 233 to 253 (YWIIIGLVIAMAMSLLFIILL). Topologically, residues 254-256 (RFL) are cytoplasmic. A helical membrane pass occupies residues 257 to 277 (AGIMVWVMIIMVILVLGYGIF). Residues 278–315 (HCYMEYSRLRGEAGSDVSLVDLGFQTDFRVYLHLRQTW) lie on the Extracellular side of the membrane. The helical transmembrane segment at 316-336 (LAFMIILSILEVIIILLLIFL) threads the bilayer. Residues 337–364 (RKRILIAIALIKEASRAVGYVMCTMLYP) are Cytoplasmic-facing. Residues 365–385 (LVTFFLLCLCIAYWASTAVFL) form a helical membrane-spanning segment. The Extracellular segment spans residues 386-440 (STSNEAVYKIFDDGLCPFTAKTCNPETFPSSNESRQCPNARCQFAFYGGESGYHR). Asn417 is a glycosylation site (N-linked (GlcNAc...) asparagine). A helical transmembrane segment spans residues 441-461 (ALLGLQIFNAFMFFWLANFVL). At 462 to 504 (ALGQVTLAGAFASYYWALRKPDDLPAFPLFSAFGRALRYHTGS) the chain is on the cytoplasmic side. The chain crosses the membrane as a helical span at residues 505-525 (LAFGALILAIVQIIRVILEYL). Over 526–563 (DQRLKAAENKFAKCLMTCLKCCFWCLEKFIKFLNRNAY) the chain is Extracellular. Residues 564–584 (IMIAIYGTNFCTSARNAFFLL) form a helical membrane-spanning segment. Over 585–599 (MRNIIRVAVLDKVTD) the chain is Cytoplasmic. The helical transmembrane segment at 600-620 (FLFLLGKLLIVGSVGILAFFF) threads the bilayer. Over 621–638 (FTHRIRIVQDTAPPLNYY) the chain is Extracellular. The chain crosses the membrane as a helical span at residues 639 to 659 (WVPILTVIVGSYLIAHGFFSV). The Cytoplasmic portion of the chain corresponds to 660–711 (YGMCVDTLFLCFCEDLERNDGSQERPYFMSPELRDILLKGSAEEGKRAEAEE).

This sequence belongs to the CTL (choline transporter-like) family. In terms of assembly, interacts with COCH. In terms of processing, N-glycosylated.

The protein resides in the cell membrane. The protein localises to the mitochondrion outer membrane. The catalysed reaction is choline(out) + n H(+)(in) = choline(in) + n H(+)(out). The enzyme catalyses ethanolamine(out) + n H(+)(in) = ethanolamine(in) + n H(+)(out). Choline/H+ antiporter, mainly in mitochodria. Also acts as a low-affinity ethanolamine/H+ antiporter, regulating the supply of extracellular ethanolamine (Etn) for the CDP-Etn pathway, redistribute intracellular Etn and balance the CDP-Cho and CDP-Etn arms of the Kennedy pathway. The polypeptide is Choline transporter-like protein 2 (SLC44A2) (Pongo abelii (Sumatran orangutan)).